We begin with the raw amino-acid sequence, 168 residues long: Small ribosomal subunit protein uS5c (168 aa).

The region spanning 17-80 (WQERVVQIRR…SDGKKKIVSV (64 aa)) is the S5 DRBM domain.

The protein belongs to the universal ribosomal protein uS5 family. In terms of assembly, part of the 30S ribosomal subunit. Contacts protein S4.

The protein localises to the plastid. Its subcellular location is the chloroplast. Functionally, with S4 and S12 plays an important role in translational accuracy. The chain is Small ribosomal subunit protein uS5c (rps5) from Rhodomonas salina (Cryptomonas salina).